Reading from the N-terminus, the 170-residue chain is Myelin-associated oligodendrocyte basic protein (170 aa).

A disordered region spans residues 69 to 170; sequence SRRATSPQKP…GSPTRAPRFW (102 aa). The segment covering 82-92 has biased composition (low complexity); that stretch reads PAASPVVVRAP. 3 positions are modified to phosphoserine: S85, S98, and S107. Copy 1 of the repeat occupies 93-101; the sequence is PAKPKSPPR. Pro residues predominate over residues 93–114; that stretch reads PAKPKSPPRPAKPRSPPIPAKP. Residues 93–119 form a 3 X 9 AA approximate tandem repeats region; sequence PAKPKSPPRPAKPRSPPIPAKPRSPSR. The 2; half-length repeat unit spans residues 105 to 110; that stretch reads PRSPPI. The stretch at 111–119 is repeat 3; the sequence is PAKPRSPSR. Residues 118-130 show a composition bias toward basic and acidic residues; it reads SRTERQPRPRPEV. The span at 138-151 shows a compositional bias: low complexity; the sequence is KPPQKSKQPARSSP.

Expressed predominantly in oligodendrocytes, in CNS myelin of the cerebrum and spinal cord. No expression seen in sciatic nerve.

Its subcellular location is the cytoplasm. It is found in the perinuclear region. Its function is as follows. May play a role in compacting or stabilizing the myelin sheath, possibly by binding the negatively charged acidic phospholipids of the cytoplasmic membrane. The chain is Myelin-associated oligodendrocyte basic protein (Mobp) from Rattus norvegicus (Rat).